Consider the following 166-residue polypeptide: Small ribosomal subunit protein uS5 (166 aa).

The S5 DRBM domain maps to 11 to 74; it reads LEDRVVAINR…DAARKNLIEV (64 aa).

This sequence belongs to the universal ribosomal protein uS5 family. As to quaternary structure, part of the 30S ribosomal subunit. Contacts proteins S4 and S8.

Its function is as follows. With S4 and S12 plays an important role in translational accuracy. Located at the back of the 30S subunit body where it stabilizes the conformation of the head with respect to the body. The sequence is that of Small ribosomal subunit protein uS5 from Ligilactobacillus salivarius (strain UCC118) (Lactobacillus salivarius).